A 590-amino-acid polypeptide reads, in one-letter code: MRFTFLRSTRIFLANHQNHLSSLQNIRTIPSSSSSPVAISSVSKLSASLDHLSDVKQEHGFMVKQGIYNSLFLQNKLLQAYTKIREFDDADKLFDEMPLRNIVTWNILIHGVIQRDGDTNHRAHLGFCYLSRILFTDVSLDHVSFMGLIRLCTDSTNMKAGIQLHCLMVKQGLESSCFPSTSLVHFYGKCGLIVEARRVFEAVLDRDLVLWNALVSSYVLNGMIDEAFGLLKLMGSDKNRFRGDYFTFSSLLSACRIEQGKQIHAILFKVSYQFDIPVATALLNMYAKSNHLSDARECFESMVVRNVVSWNAMIVGFAQNGEGREAMRLFGQMLLENLQPDELTFASVLSSCAKFSAIWEIKQVQAMVTKKGSADFLSVANSLISSYSRNGNLSEALLCFHSIREPDLVSWTSVIGALASHGFAEESLQMFESMLQKLQPDKITFLEVLSACSHGGLVQEGLRCFKRMTEFYKIEAEDEHYTCLIDLLGRAGFIDEASDVLNSMPTEPSTHALAAFTGGCNIHEKRESMKWGAKKLLEIEPTKPVNYSILSNAYVSEGHWNQAALLRKRERRNCYNPKTPGCSWLGDYSI.

A mitochondrion-targeting transit peptide spans methionine 1–isoleucine 109. PPR repeat units follow at residues aspartate 141 to serine 175, serine 176 to arginine 206, aspartate 207 to phenylalanine 241, aspartate 244 to isoleucine 266, aspartate 275 to arginine 305, asparagine 306 to proline 340, aspartate 341 to aspartate 375, phenylalanine 376 to proline 406, aspartate 407 to lysine 437, aspartate 441 to phenylalanine 471, and glutamate 477 to glutamate 507. The tract at residues alanine 512–tyrosine 588 is type E motif.

This sequence belongs to the PPR family. PCMP-E subfamily.

Its subcellular location is the mitochondrion. This Arabidopsis thaliana (Mouse-ear cress) protein is Pentatricopeptide repeat-containing protein At2g46050, mitochondrial (PCMP-E39).